The sequence spans 460 residues: MLKEYRTITEVAGPLMLVQKVEGVKYGELGEIELANGEIRRCKVLEVDGQNALVQLFESSTGINVATSKVRFLGRSIELPVSMDMLGRVFSGMGKPLDGGPNIIPDKRLDINGLPMNPAARNYPSEFIQTGISAIDGLNTLVRGQKLPIFSGSGLPHAQLAAQIARQAKVLGTDSKFAVVFAAVGITFEEADYFISDFKRTGAIDRTVLFINLANDPAIERISTPRMALTAAEYLAFDKGMHVLVIITDITNYAEALREVSAARKEVPGRRGYPGYLYTDLATIYERAGRRIDSEGSITLIPILTMPEDDKTHPIPDLTGYITEGQIILSRELHRKGVTPPIDVLPSLSRLKDKGIGKGKTREDHADTMNQLFAAYARGKEAKELAVILGDAALSDTDKLYAKFADAFEKEYVSQGFNEDRSIEKTLEIGWKLLSILPRSELKRIRDEYLDKYLPKAAEN.

The protein belongs to the ATPase alpha/beta chains family.

Produces ATP from ADP in the presence of a proton gradient across the membrane. The V-type beta chain is a regulatory subunit. The protein is V-type ATP synthase beta chain of Acetivibrio thermocellus (strain ATCC 27405 / DSM 1237 / JCM 9322 / NBRC 103400 / NCIMB 10682 / NRRL B-4536 / VPI 7372) (Clostridium thermocellum).